We begin with the raw amino-acid sequence, 542 residues long: CTP synthase (542 aa).

Residues 1-265 (MTRYIFVTGG…DDFVVERFGL (265 aa)) are amidoligase domain. A CTP-binding site is contributed by Ser-13. Ser-13 is a UTP binding site. Residues 14–19 (SLGKGI) and Asp-71 contribute to the ATP site. Asp-71 and Glu-139 together coordinate Mg(2+). Residues 146–148 (DIE), 186–191 (KTKPTQ), and Lys-222 each bind CTP. UTP-binding positions include 186–191 (KTKPTQ) and Lys-222. The region spanning 290–541 (TIAMVGKYME…VKAALAQKNK (252 aa)) is the Glutamine amidotransferase type-1 domain. Gly-351 provides a ligand contact to L-glutamine. Catalysis depends on Cys-378, which acts as the Nucleophile; for glutamine hydrolysis. L-glutamine is bound by residues 379-382 (LGMQ), Glu-402, and Arg-469. Catalysis depends on residues His-514 and Glu-516.

Belongs to the CTP synthase family. As to quaternary structure, homotetramer.

It catalyses the reaction UTP + L-glutamine + ATP + H2O = CTP + L-glutamate + ADP + phosphate + 2 H(+). The catalysed reaction is L-glutamine + H2O = L-glutamate + NH4(+). It carries out the reaction UTP + NH4(+) + ATP = CTP + ADP + phosphate + 2 H(+). It functions in the pathway pyrimidine metabolism; CTP biosynthesis via de novo pathway; CTP from UDP: step 2/2. Allosterically activated by GTP, when glutamine is the substrate; GTP has no effect on the reaction when ammonia is the substrate. The allosteric effector GTP functions by stabilizing the protein conformation that binds the tetrahedral intermediate(s) formed during glutamine hydrolysis. Inhibited by the product CTP, via allosteric rather than competitive inhibition. Catalyzes the ATP-dependent amination of UTP to CTP with either L-glutamine or ammonia as the source of nitrogen. Regulates intracellular CTP levels through interactions with the four ribonucleotide triphosphates. The polypeptide is CTP synthase (Pseudomonas putida (strain GB-1)).